A 396-amino-acid polypeptide reads, in one-letter code: L-lactate dehydrogenase (396 aa).

Residues 1–380 form the FMN hydroxy acid dehydrogenase domain; it reads MIISAASDYR…TQDSLVQGLG (380 aa). A substrate-binding site is contributed by Y24. FMN is bound by residues S106 and Q127. Residue Y129 participates in substrate binding. T155 lines the FMN pocket. R164 is a substrate binding site. Residue K251 participates in FMN binding. H275 serves as the catalytic Proton acceptor. A substrate-binding site is contributed by R278. An FMN-binding site is contributed by 306-330; it reads DSGIRNGLDVVRMIALGADTVLLGR.

The protein belongs to the FMN-dependent alpha-hydroxy acid dehydrogenase family. It depends on FMN as a cofactor.

Its subcellular location is the cell inner membrane. The catalysed reaction is (S)-lactate + A = pyruvate + AH2. Its function is as follows. Catalyzes the conversion of L-lactate to pyruvate. Is coupled to the respiratory chain. This Shigella boydii serotype 18 (strain CDC 3083-94 / BS512) protein is L-lactate dehydrogenase.